The primary structure comprises 400 residues: uncharacterized protein (400 aa).

Residue Gly-36–Thr-43 coordinates ATP.

The protein belongs to the archaeal ATPase family.

This is an uncharacterized protein from Methanocaldococcus jannaschii (strain ATCC 43067 / DSM 2661 / JAL-1 / JCM 10045 / NBRC 100440) (Methanococcus jannaschii).